The chain runs to 688 residues: Protein sel-1 homolog 2 (688 aa).

A signal peptide spans 1-18; sequence MNPLALLVEILIIIEVTT. Over 19-662 the chain is Extracellular; sequence KNTEAERYNR…KWKWLKLDST (644 aa). The N-linked (GlcNAc...) asparagine glycan is linked to asparagine 34. Sel1-like repeat units lie at residues 107-142, 143-178, 179-214, 215-250, 297-333, 334-370, 371-406, 407-442, 443-478, 551-586, and 588-623; these read GDEL…NMGN, LKAM…KEGS, YKAQ…AGGS, MMSQ…DYIA, VQIQ…KAGS, ANAM…SKGN, AIGL…EKGW, PNAQ…QSGQ, PLAI…ELGH, AFAR…DKHH, and AQAM…QTSP. N-linked (GlcNAc...) asparagine glycosylation occurs at asparagine 162. Residues 663-683 traverse the membrane as a helical segment; it reads VGPYWDLLVIGLIVAMLIFLL. The Cytoplasmic segment spans residues 684 to 688; it reads RNRHR.

It belongs to the sel-1 family.

The protein localises to the membrane. It localises to the cell projection. Its subcellular location is the cilium. The protein resides in the nucleus speckle. The chain is Protein sel-1 homolog 2 (Sel1l2) from Mus musculus (Mouse).